We begin with the raw amino-acid sequence, 217 residues long: Phosphatidylserine decarboxylase proenzyme (217 aa).

Catalysis depends on S187, which acts as the Schiff-base intermediate with substrate; via pyruvic acid. Position 187 is a pyruvic acid (Ser); by autocatalysis (S187).

The protein belongs to the phosphatidylserine decarboxylase family. PSD-A subfamily. In terms of assembly, heterodimer of a large membrane-associated beta subunit and a small pyruvoyl-containing alpha subunit. Pyruvate serves as cofactor. Is synthesized initially as an inactive proenzyme. Formation of the active enzyme involves a self-maturation process in which the active site pyruvoyl group is generated from an internal serine residue via an autocatalytic post-translational modification. Two non-identical subunits are generated from the proenzyme in this reaction, and the pyruvate is formed at the N-terminus of the alpha chain, which is derived from the carboxyl end of the proenzyme. The post-translation cleavage follows an unusual pathway, termed non-hydrolytic serinolysis, in which the side chain hydroxyl group of the serine supplies its oxygen atom to form the C-terminus of the beta chain, while the remainder of the serine residue undergoes an oxidative deamination to produce ammonia and the pyruvoyl prosthetic group on the alpha chain.

It is found in the cell membrane. It catalyses the reaction a 1,2-diacyl-sn-glycero-3-phospho-L-serine + H(+) = a 1,2-diacyl-sn-glycero-3-phosphoethanolamine + CO2. The protein operates within phospholipid metabolism; phosphatidylethanolamine biosynthesis; phosphatidylethanolamine from CDP-diacylglycerol: step 2/2. Catalyzes the formation of phosphatidylethanolamine (PtdEtn) from phosphatidylserine (PtdSer). This chain is Phosphatidylserine decarboxylase proenzyme, found in Thermobifida fusca (strain YX).